The following is a 197-amino-acid chain: MAREKIVVAGGTTKSWKLLLGLRIFAFMATLAAAIVMSLNKETKTLVVATIGTVPIKATLTAKFQHTPAFVFFVIANVMVSFHNLLMIVVQIFSRKLEYKGLRLLSIAILDMLNATLVSAAANAAVFVAELGKNGNKHAKWNKVCDRFTTYCDHGAGAIIAAFAGVILMLLVSAVSISRLLINSKNFSTTATTTSVV.

Ala2 carries the post-translational modification N-acetylalanine. The Cytoplasmic segment spans residues 2–17 (AREKIVVAGGTTKSWK). The chain crosses the membrane as a helical span at residues 18-38 (LLLGLRIFAFMATLAAAIVMS). Residues 39 to 69 (LNKETKTLVVATIGTVPIKATLTAKFQHTPA) are Extracellular-facing. The helical transmembrane segment at 70 to 90 (FVFFVIANVMVSFHNLLMIVV) threads the bilayer. Topologically, residues 91–106 (QIFSRKLEYKGLRLLS) are cytoplasmic. A helical transmembrane segment spans residues 107–127 (IAILDMLNATLVSAAANAAVF). Residues 128-156 (VAELGKNGNKHAKWNKVCDRFTTYCDHGA) lie on the Extracellular side of the membrane. A helical membrane pass occupies residues 157 to 177 (GAIIAAFAGVILMLLVSAVSI). Residues 178–197 (SRLLINSKNFSTTATTTSVV) lie on the Cytoplasmic side of the membrane.

This sequence belongs to the Casparian strip membrane proteins (CASP) family. In terms of assembly, homodimer and heterodimers.

It is found in the cell membrane. This is CASP-like protein 1B2 from Arabidopsis thaliana (Mouse-ear cress).